The following is a 257-amino-acid chain: Triosephosphate isomerase (257 aa).

9–11 (NWK) provides a ligand contact to substrate. Residue His-95 is the Electrophile of the active site. The active-site Proton acceptor is Glu-168. Residues Gly-174, Ser-213, and 234–235 (GG) contribute to the substrate site.

Belongs to the triosephosphate isomerase family. As to quaternary structure, homodimer.

The protein resides in the cytoplasm. The enzyme catalyses D-glyceraldehyde 3-phosphate = dihydroxyacetone phosphate. Its pathway is carbohydrate biosynthesis; gluconeogenesis. The protein operates within carbohydrate degradation; glycolysis; D-glyceraldehyde 3-phosphate from glycerone phosphate: step 1/1. Involved in the gluconeogenesis. Catalyzes stereospecifically the conversion of dihydroxyacetone phosphate (DHAP) to D-glyceraldehyde-3-phosphate (G3P). The sequence is that of Triosephosphate isomerase from Acidithiobacillus ferrooxidans (strain ATCC 23270 / DSM 14882 / CIP 104768 / NCIMB 8455) (Ferrobacillus ferrooxidans (strain ATCC 23270)).